The sequence spans 120 residues: Large ribosomal subunit protein eL8 (120 aa).

This sequence belongs to the eukaryotic ribosomal protein eL8 family. As to quaternary structure, part of the 50S ribosomal subunit. Probably part of the RNase P complex.

It is found in the cytoplasm. In terms of biological role, multifunctional RNA-binding protein that recognizes the K-turn motif in ribosomal RNA, the RNA component of RNase P, box H/ACA, box C/D and box C'/D' sRNAs. The polypeptide is Large ribosomal subunit protein eL8 (Halobacterium salinarum (strain ATCC 29341 / DSM 671 / R1)).